Consider the following 111-residue polypeptide: UPF0339 protein BP0521 (111 aa).

2 consecutive repeat copies span residues 9–57 (ASGT…RYQR) and 60–108 (AKDG…TKDQ). The segment at 86-111 (TQARDNGIASVKSNAPGAPTKDQTQA) is disordered.

The protein belongs to the UPF0339 family. Duplicated subfamily.

This is UPF0339 protein BP0521 from Bordetella pertussis (strain Tohama I / ATCC BAA-589 / NCTC 13251).